The sequence spans 427 residues: Glucose-6-phosphate isomerase (427 aa).

The active-site Proton donor is the E277. Catalysis depends on residues H298 and K414.

This sequence belongs to the GPI family.

It is found in the cytoplasm. It carries out the reaction alpha-D-glucose 6-phosphate = beta-D-fructose 6-phosphate. Its pathway is carbohydrate biosynthesis; gluconeogenesis. It functions in the pathway carbohydrate degradation; glycolysis; D-glyceraldehyde 3-phosphate and glycerone phosphate from D-glucose: step 2/4. Its function is as follows. Catalyzes the reversible isomerization of glucose-6-phosphate to fructose-6-phosphate. The sequence is that of Glucose-6-phosphate isomerase from Mycoplasma capricolum subsp. capricolum (strain California kid / ATCC 27343 / NCTC 10154).